The sequence spans 345 residues: Uroporphyrinogen decarboxylase (345 aa).

Residues 28–32 (RQAGR), Asp-77, Tyr-152, Ser-207, and His-321 each bind substrate.

The protein belongs to the uroporphyrinogen decarboxylase family. In terms of assembly, homodimer.

It is found in the cytoplasm. It carries out the reaction uroporphyrinogen III + 4 H(+) = coproporphyrinogen III + 4 CO2. Its pathway is porphyrin-containing compound metabolism; protoporphyrin-IX biosynthesis; coproporphyrinogen-III from 5-aminolevulinate: step 4/4. Catalyzes the decarboxylation of four acetate groups of uroporphyrinogen-III to yield coproporphyrinogen-III. The sequence is that of Uroporphyrinogen decarboxylase from Arthrobacter sp. (strain FB24).